A 158-amino-acid chain; its full sequence is Superoxide dismutase [Cu-Zn] (158 aa).

Residues His-46, His-48, and His-63 each contribute to the Cu cation site. A disulfide bridge links Cys-57 with Cys-149. The Zn(2+) site is built by His-63, His-71, His-80, and Asp-83. His-120 contacts Cu cation.

This sequence belongs to the Cu-Zn superoxide dismutase family. Homodimer. Requires Cu cation as cofactor. The cofactor is Zn(2+).

It is found in the cytoplasm. It carries out the reaction 2 superoxide + 2 H(+) = H2O2 + O2. Functionally, destroys radicals which are normally produced within the cells and which are toxic to biological systems. This is Superoxide dismutase [Cu-Zn] (SODC) from Brugia pahangi (Filarial nematode worm).